We begin with the raw amino-acid sequence, 144 residues long: Large ribosomal subunit protein uL15 (144 aa).

Positions 1–52 (MYLNTISPMKKSNHSSKRKGRGIGSGKGKTSGRGHKGQRSRSGGKVRRGFEG) are disordered. Composition is skewed to basic residues over residues 11 to 21 (KSNHSSKRKGR) and 30 to 47 (TSGR…GKVR).

This sequence belongs to the universal ribosomal protein uL15 family. As to quaternary structure, part of the 50S ribosomal subunit.

Its function is as follows. Binds to the 23S rRNA. The protein is Large ribosomal subunit protein uL15 of Wigglesworthia glossinidia brevipalpis.